We begin with the raw amino-acid sequence, 264 residues long: Thymidylate synthase (264 aa).

Arginine 21 serves as a coordination point for dUMP. (6R)-5,10-methylene-5,6,7,8-tetrahydrofolate is bound at residue histidine 51. 126-127 (RR) is a binding site for dUMP. Cysteine 146 (nucleophile) is an active-site residue. DUMP contacts are provided by residues 166-169 (RSCD), asparagine 177, and 207-209 (HLY). (6R)-5,10-methylene-5,6,7,8-tetrahydrofolate is bound at residue aspartate 169. Alanine 263 contacts (6R)-5,10-methylene-5,6,7,8-tetrahydrofolate.

Belongs to the thymidylate synthase family. Bacterial-type ThyA subfamily. In terms of assembly, homodimer.

The protein resides in the cytoplasm. The catalysed reaction is dUMP + (6R)-5,10-methylene-5,6,7,8-tetrahydrofolate = 7,8-dihydrofolate + dTMP. Its pathway is pyrimidine metabolism; dTTP biosynthesis. Catalyzes the reductive methylation of 2'-deoxyuridine-5'-monophosphate (dUMP) to 2'-deoxythymidine-5'-monophosphate (dTMP) while utilizing 5,10-methylenetetrahydrofolate (mTHF) as the methyl donor and reductant in the reaction, yielding dihydrofolate (DHF) as a by-product. This enzymatic reaction provides an intracellular de novo source of dTMP, an essential precursor for DNA biosynthesis. The chain is Thymidylate synthase from Escherichia coli (strain 55989 / EAEC).